Here is a 360-residue protein sequence, read N- to C-terminus: Ribosomal RNA small subunit methyltransferase C (360 aa).

This sequence belongs to the methyltransferase superfamily. RsmC family. As to quaternary structure, monomer.

It is found in the cytoplasm. The enzyme catalyses guanosine(1207) in 16S rRNA + S-adenosyl-L-methionine = N(2)-methylguanosine(1207) in 16S rRNA + S-adenosyl-L-homocysteine + H(+). Functionally, specifically methylates the guanine in position 1207 of 16S rRNA in the 30S particle. The polypeptide is Ribosomal RNA small subunit methyltransferase C (Alteromonas mediterranea (strain DSM 17117 / CIP 110805 / LMG 28347 / Deep ecotype)).